The following is a 309-amino-acid chain: Tagatose-6-phosphate kinase (309 aa).

It belongs to the carbohydrate kinase PfkB family. LacC subfamily.

The catalysed reaction is D-tagatofuranose 6-phosphate + ATP = D-tagatofuranose 1,6-bisphosphate + ADP + H(+). Its pathway is carbohydrate metabolism; D-tagatose 6-phosphate degradation; D-glyceraldehyde 3-phosphate and glycerone phosphate from D-tagatose 6-phosphate: step 1/2. The sequence is that of Tagatose-6-phosphate kinase from Streptococcus pneumoniae (strain 70585).